The primary structure comprises 395 residues: Phosphoglycerate kinase (395 aa).

Substrate-binding positions include 21–23 (DLN), Arg36, 59–62 (HLGR), Arg113, and Arg146. ATP-binding positions include Lys197, Glu324, and 350–353 (GGDT).

It belongs to the phosphoglycerate kinase family. Monomer.

Its subcellular location is the cytoplasm. The catalysed reaction is (2R)-3-phosphoglycerate + ATP = (2R)-3-phospho-glyceroyl phosphate + ADP. Its pathway is carbohydrate degradation; glycolysis; pyruvate from D-glyceraldehyde 3-phosphate: step 2/5. This Acinetobacter baumannii (strain ATCC 17978 / DSM 105126 / CIP 53.77 / LMG 1025 / NCDC KC755 / 5377) protein is Phosphoglycerate kinase.